The primary structure comprises 770 residues: MDFSKFLADDFDVKEWINAAFRAGSKEAASGKADGHAATLVMKLQLFIQEVNHAVEETSHQALQNMPKVLRDVEALKQEASFLKEQMILVKEDIKKFEQDTSQSMQVLVEIDQVKSRMQLAAESLQEADKWSTLSADIEETFKTQDIAVISAKLTGMQNSLMMLVDTPDYSEKCVHLEALKNRLEALASPQIVAAFTSQAVDQSKVFVKVFTEIDRMPQLLAYYYKCHKVQLLAAWQELCQSDLSLDRQLTGLYDALLGAWHTQIQWATQVFQKPHEVVMVLLIQTLGALMPSLPSCLSNGVERAGPEQELTRLLEFYDATAHFAKGLEMALLPHLHEHNLVKVTELVDAVYDPYKPYQLKYGDMEESNLLIQMSAVPLEHGEVIDCVQELSHSVNKLFGLASAAVDRCVRFTNGLGTCGLLSALKSLFAKYVSDFTSTLQSIRKKCKLDHIPPNSLFQEDWTAFQNSIRIIATCGELLRHCGDFEQQLANRILSTAGKYLSDSCSPRSLAGFQESILTDKKNSAKNPWQEYNYLQKDNPAEYASLMEILYTLKEKGSSNHNLLAAPRAALTRLNQQAHQLAFDSVFLRIKQQLLLISKMDSWNTAGIGETLTDELPAFSLTPLEYISNIGQYIMSLPLNLEPFVTQEDSALELALHAGKLPFPPEQGDELPELDNMADNWLGSIARATMQTYCDAILQIPELSPHSAKQLATDIDYLINVMDALGLQPSRTLQHIVTLLKTRPEDYRQVSKGLPRRLATTVATMRSVNY.

The protein belongs to the COG7 family. Component of the conserved oligomeric Golgi complex which is composed of eight different subunits and is required for normal Golgi morphology and localization.

Its subcellular location is the golgi apparatus membrane. In terms of biological role, required for normal Golgi function. The protein is Conserved oligomeric Golgi complex subunit 7 (COG7) of Homo sapiens (Human).